The chain runs to 398 residues: tRNA-specific 2-thiouridylase MnmA (398 aa).

ATP is bound by residues 20–27 (AMSGGVDS) and Leu-46. Cys-114 (nucleophile) is an active-site residue. A disulfide bridge links Cys-114 with Cys-210. Gly-138 contacts ATP. The segment at 160 to 162 (RDQ) is interaction with tRNA. Cys-210 serves as the catalytic Cysteine persulfide intermediate.

It belongs to the MnmA/TRMU family.

Its subcellular location is the cytoplasm. It carries out the reaction S-sulfanyl-L-cysteinyl-[protein] + uridine(34) in tRNA + AH2 + ATP = 2-thiouridine(34) in tRNA + L-cysteinyl-[protein] + A + AMP + diphosphate + H(+). In terms of biological role, catalyzes the 2-thiolation of uridine at the wobble position (U34) of tRNA, leading to the formation of s(2)U34. This chain is tRNA-specific 2-thiouridylase MnmA, found in Brucella melitensis biotype 1 (strain ATCC 23456 / CCUG 17765 / NCTC 10094 / 16M).